Consider the following 61-residue polypeptide: Small ribosomal subunit protein uS14 (61 aa).

Residues Cys-24, Cys-27, Cys-40, and Cys-43 each coordinate Zn(2+).

Belongs to the universal ribosomal protein uS14 family. Zinc-binding uS14 subfamily. As to quaternary structure, part of the 30S ribosomal subunit. Contacts proteins S3 and S10. Zn(2+) is required as a cofactor.

Its function is as follows. Binds 16S rRNA, required for the assembly of 30S particles and may also be responsible for determining the conformation of the 16S rRNA at the A site. In Mycoplasma pneumoniae (strain ATCC 29342 / M129 / Subtype 1) (Mycoplasmoides pneumoniae), this protein is Small ribosomal subunit protein uS14.